The following is a 61-amino-acid chain: Pleurocidin-like peptide WF3 (61 aa).

The N-terminal stretch at 1-22 (MKFTATFLVLSLVVLMAEPGEC) is a signal peptide. Positions 48–61 (YDEQQELNKRAVDE) are excised as a propeptide.

This sequence belongs to the pleurocidin family.

It is found in the secreted. In terms of biological role, antimicrobial peptide. The polypeptide is Pleurocidin-like peptide WF3 (ple3) (Pseudopleuronectes americanus (Winter flounder)).